Consider the following 408-residue polypeptide: LysM domain-containing protein ARB_01488 (408 aa).

The first 17 residues, 1–17 (MVKYALLPLVAVSLVQA), serve as a signal peptide directing secretion. In terms of domain architecture, LysM 1 spans 42 to 91 (SWINVVDASGKLTCDAFLDTINVAKRQFIFWNPQLNSDCSNIQSKASYCA). Residues 98–178 (SKQTRGQMDP…HGPKEAPPPD (81 aa)) form a disordered region. Residues 106–116 (DPPPKTKPLPP) are compositionally biased toward pro residues. LysM domains are found at residues 270–320 (QYHT…RVCV) and 360–406 (SFEL…YACV).

The protein localises to the secreted. Functionally, might have a role in sequestration of chitin oligosaccharides (breakdown products of fungal cell walls that are released during invasion and act as triggers of host immunity) to dampen host defense. The sequence is that of LysM domain-containing protein ARB_01488 from Arthroderma benhamiae (strain ATCC MYA-4681 / CBS 112371) (Trichophyton mentagrophytes).